Here is an 854-residue protein sequence, read N- to C-terminus: Lysine-specific demethylase 3 (854 aa).

Positions 64–88 (QRVQQEEESLGQVPPLTEEEQQRHD) are disordered. Positions 601–806 (LRTGNLNIAS…HCYHLTHEFR (206 aa)) constitute a JmjC domain. Fe cation-binding residues include His-643, Asp-645, and His-774.

This sequence belongs to the JHDM2-like histone demethylase family. The cofactor is Fe(2+). As to expression, expressed in neurons close to the dorsal lateral neurons involved in circadian rhythm.

It is found in the nucleus. It localises to the cytoplasm. It catalyses the reaction N(6),N(6)-dimethyl-L-lysyl(9)-[histone H3] + 2 2-oxoglutarate + 2 O2 = L-lysyl(9)-[histone H3] + 2 formaldehyde + 2 succinate + 2 CO2. In terms of biological role, histone demethylase that specifically demethylates 'Lys-10' of histone H3 (H3K9), thereby playing a central role in histone code. Demethylation of Lys residue generates formaldehyde and succinate. Probably involved in regulation of chromatin structure, promoting expansion of euchromatin. Negatively regulates rhino-dependent piRNA production capacity of several genomic regions; may help define the frontiers of piRNA clusters by regulating histone methylation levels. May be involved in regulation of behavior and circadian rhythms. The polypeptide is Lysine-specific demethylase 3 (Drosophila melanogaster (Fruit fly)).